The chain runs to 366 residues: tRNA/tmRNA (uracil-C(5))-methyltransferase (366 aa).

The S-adenosyl-L-methionine site is built by Gln190, Tyr218, Asn223, Glu239, and Asp299. Cys324 serves as the catalytic Nucleophile. Glu358 functions as the Proton acceptor in the catalytic mechanism.

It belongs to the class I-like SAM-binding methyltransferase superfamily. RNA M5U methyltransferase family. TrmA subfamily.

The catalysed reaction is uridine(54) in tRNA + S-adenosyl-L-methionine = 5-methyluridine(54) in tRNA + S-adenosyl-L-homocysteine + H(+). The enzyme catalyses uridine(341) in tmRNA + S-adenosyl-L-methionine = 5-methyluridine(341) in tmRNA + S-adenosyl-L-homocysteine + H(+). Dual-specificity methyltransferase that catalyzes the formation of 5-methyluridine at position 54 (m5U54) in all tRNAs, and that of position 341 (m5U341) in tmRNA (transfer-mRNA). This chain is tRNA/tmRNA (uracil-C(5))-methyltransferase, found in Salmonella arizonae (strain ATCC BAA-731 / CDC346-86 / RSK2980).